The chain runs to 159 residues: Serine-protein kinase RsbW (159 aa).

Belongs to the anti-sigma-factor family.

The catalysed reaction is L-seryl-[protein] + ATP = O-phospho-L-seryl-[protein] + ADP + H(+). The enzyme catalyses L-threonyl-[protein] + ATP = O-phospho-L-threonyl-[protein] + ADP + H(+). In terms of biological role, negative regulator of sigma-B activity. Phosphorylates and inactivates its specific antagonist protein, RsbV. Upon phosphorylation of RsbV, RsbW is released and binds to sigma-B, thereby blocking its ability to form an RNA polymerase holoenzyme (E-sigma-B). This is Serine-protein kinase RsbW from Staphylococcus aureus (strain Newman).